The chain runs to 383 residues: UDP-N-acetylglucosamine--N-acetylmuramyl-(pentapeptide) pyrophosphoryl-undecaprenol N-acetylglucosamine transferase (383 aa).

Residues 10 to 12 (TGG), Asn-124, Arg-165, Ser-190, Ile-245, and Gln-290 each bind UDP-N-acetyl-alpha-D-glucosamine. Positions 363 to 383 (SPFGQAREPGQKPARPPDPAS) are disordered.

It belongs to the glycosyltransferase 28 family. MurG subfamily.

It localises to the cell inner membrane. It carries out the reaction di-trans,octa-cis-undecaprenyl diphospho-N-acetyl-alpha-D-muramoyl-L-alanyl-D-glutamyl-meso-2,6-diaminopimeloyl-D-alanyl-D-alanine + UDP-N-acetyl-alpha-D-glucosamine = di-trans,octa-cis-undecaprenyl diphospho-[N-acetyl-alpha-D-glucosaminyl-(1-&gt;4)]-N-acetyl-alpha-D-muramoyl-L-alanyl-D-glutamyl-meso-2,6-diaminopimeloyl-D-alanyl-D-alanine + UDP + H(+). Its pathway is cell wall biogenesis; peptidoglycan biosynthesis. In terms of biological role, cell wall formation. Catalyzes the transfer of a GlcNAc subunit on undecaprenyl-pyrophosphoryl-MurNAc-pentapeptide (lipid intermediate I) to form undecaprenyl-pyrophosphoryl-MurNAc-(pentapeptide)GlcNAc (lipid intermediate II). The chain is UDP-N-acetylglucosamine--N-acetylmuramyl-(pentapeptide) pyrophosphoryl-undecaprenol N-acetylglucosamine transferase from Anaeromyxobacter dehalogenans (strain 2CP-1 / ATCC BAA-258).